The primary structure comprises 408 residues: Biphenyl dioxygenase system ferredoxin--NAD(+) reductase component (408 aa).

Position 4–35 (threonine 4–aspartate 35) interacts with FAD. An NAD(+)-binding site is contributed by serine 145–glutamate 173.

It belongs to the bacterial ring-hydroxylating dioxygenase ferredoxin reductase family. This dioxygenase system consists of four proteins: the two subunits of the hydroxylase component (BphA and BphE), a ferredoxin (BphF) and a ferredoxin reductase (BphG). FAD is required as a cofactor.

It catalyses the reaction 2 reduced [2Fe-2S]-[ferredoxin] + NAD(+) + H(+) = 2 oxidized [2Fe-2S]-[ferredoxin] + NADH. The protein operates within xenobiotic degradation; biphenyl degradation. Functionally, part of the electron transfer component of biphenyl dioxygenase, transfers electrons from ferredoxin (BphF) to NADH. The protein is Biphenyl dioxygenase system ferredoxin--NAD(+) reductase component (bphG) of Paraburkholderia xenovorans (strain LB400).